A 766-amino-acid polypeptide reads, in one-letter code: Leucine-rich repeat and fibronectin type III domain-containing protein 1 (766 aa).

The N-terminal stretch at 1–31 is a signal peptide; that stretch reads MAPGPFSSGLFSPPPAALPFLLLLWAGASRG. The region spanning 32–65 is the LRRNT domain; that stretch reads QPCPGRCICQNVAPTLTMLCAKTGLLFVPPAIDR. Residues 32–536 are Extracellular-facing; sequence QPCPGRCICQ…LRAHFLGGTM (505 aa). LRR repeat units follow at residues 66–87, 90–111, 114–135, 138–159, 163–184, 187–208, and 211–232; these read RVVE…DFAN, SLVH…AFAD, ALRA…QLRG, NLRH…AFDA, TVED…AVGQ, NLNT…TFVQ, and KLVR…GLFL. N-linked (GlcNAc...) asparagine glycosylation occurs at N87. The region spanning 252-298 is the LRRCT domain; the sequence is NPLHCNCELLWLRRLTREDDLETCATPEHLTDRYFWSIPEEEFLCEP. The Ig-like domain occupies 299–386; sequence PLITRQAGGR…GEATAPVEVC (88 aa). C321 and C370 are disulfide-bonded. The N-linked (GlcNAc...) asparagine glycan is linked to N343. The segment at 397–424 is disordered; it reads PAAPPPLTEPGSSDIATPGRPGANDSTS. One can recognise a Fibronectin type-III domain in the interval 424 to 520; sequence SERRLVAAEL…GCVQFTTAGD (97 aa). The chain crosses the membrane as a helical span at residues 537–557; sequence IIAIGGVIVASVLVFIVLLMI. The Cytoplasmic portion of the chain corresponds to 558-766; it reads RYKVYGDGDS…STEWMLESTV (209 aa). Disordered regions lie at residues 568–601 and 645–742; these read RRIK…PPAP and LCLL…GEDG. S713 carries the post-translational modification Phosphoserine. A compositionally biased stretch (basic residues) spans 714–727; that stretch reads YPRRARRTKRHRST. The PDZ-binding signature appears at 763 to 766; it reads ESTV.

Belongs to the LRFN family. As to quaternary structure, can form heteromeric complexes with LRFN2, LRFN3, LRFN4 and LRFN5. Forms homomeric complexes, but not across cell junctions. Interacts with DLG4. Also interacts with DLG1, DLG2, and DLG3. Interacts with 2 AMPA receptor subunits GRIA1 and GRIA2 and NMDA receptor subunit GRIN1. Post-translationally, glycosylated. Predominantly expressed in the brain, with a weak, but broad expression in the cerebral cortex and diencephalic nuclei. Also detected in other parts of the central nervous system, including the olfactory bulb, pons, cerebellum, and medulla oblongata, as well as in the peripheral nervous system, such as the ganglia of cranial nerves and the dorsal root ganglion during gestation.

The protein resides in the membrane. It localises to the synapse. Its subcellular location is the postsynaptic density membrane. In terms of biological role, promotes neurite outgrowth in hippocampal neurons. Involved in the regulation and maintenance of excitatory synapses. Induces the clustering of excitatory postsynaptic proteins, including DLG4, DLGAP1, GRIA1 and GRIN1. This is Leucine-rich repeat and fibronectin type III domain-containing protein 1 (Lrfn1) from Mus musculus (Mouse).